The following is a 421-amino-acid chain: Acetylglutamate kinase (421 aa).

Positions 1 to 252 (MASTKEISQY…PLESSVSITR (252 aa)) are acetylglutamate kinase. Substrate contacts are provided by residues 59-60 (AG), arginine 81, and asparagine 170. An N-acetyltransferase domain is found at 274 to 420 (ERVIRATTWK…HCAQHPPTLI (147 aa)).

The protein in the N-terminal section; belongs to the acetylglutamate kinase family. ArgB subfamily.

It is found in the cytoplasm. It carries out the reaction N-acetyl-L-glutamate + ATP = N-acetyl-L-glutamyl 5-phosphate + ADP. Its pathway is amino-acid biosynthesis; L-arginine biosynthesis; N(2)-acetyl-L-ornithine from L-glutamate: step 2/4. The protein is Acetylglutamate kinase (argB) of Xylella fastidiosa (strain 9a5c).